A 570-amino-acid chain; its full sequence is A-type ATP synthase subunit A (570 aa).

223–230 (GPFGSGKT) is a binding site for ATP.

The protein belongs to the ATPase alpha/beta chains family. Has multiple subunits with at least A(3), B(3), C, D, E, F, H, I and proteolipid K(x).

The protein localises to the cell membrane. The enzyme catalyses ATP + H2O + 4 H(+)(in) = ADP + phosphate + 5 H(+)(out). Component of the A-type ATP synthase that produces ATP from ADP in the presence of a proton gradient across the membrane. The A chain is the catalytic subunit. The protein is A-type ATP synthase subunit A of Nanoarchaeum equitans (strain Kin4-M).